Here is a 446-residue protein sequence, read N- to C-terminus: Phosphoglucosamine mutase (446 aa).

The Phosphoserine intermediate role is filled by S101. Mg(2+)-binding residues include S101, D240, D242, and D244. S101 is modified (phosphoserine).

The protein belongs to the phosphohexose mutase family. It depends on Mg(2+) as a cofactor. Activated by phosphorylation.

The catalysed reaction is alpha-D-glucosamine 1-phosphate = D-glucosamine 6-phosphate. In terms of biological role, catalyzes the conversion of glucosamine-6-phosphate to glucosamine-1-phosphate. The protein is Phosphoglucosamine mutase of Pseudomonas putida (strain W619).